Consider the following 434-residue polypeptide: Homogentisate 1,2-dioxygenase (434 aa).

H289 acts as the Proton acceptor in catalysis. Fe cation is bound by residues H332 and E338. Homogentisate is bound by residues Y347 and H368. H368 lines the Fe cation pocket.

It belongs to the homogentisate dioxygenase family. As to quaternary structure, hexamer; dimer of trimers. Fe cation is required as a cofactor.

It catalyses the reaction homogentisate + O2 = 4-maleylacetoacetate + H(+). Its pathway is amino-acid degradation; L-phenylalanine degradation; acetoacetate and fumarate from L-phenylalanine: step 4/6. In terms of biological role, involved in the catabolism of homogentisate (2,5-dihydroxyphenylacetate or 2,5-OH-PhAc), a central intermediate in the degradation of phenylalanine and tyrosine. Catalyzes the oxidative ring cleavage of the aromatic ring of homogentisate to yield maleylacetoacetate. In Pseudomonas syringae pv. tomato (strain ATCC BAA-871 / DC3000), this protein is Homogentisate 1,2-dioxygenase.